A 259-amino-acid chain; its full sequence is Thiazole synthase (259 aa).

The Schiff-base intermediate with DXP role is filled by Lys99. Residues Gly161, 187 to 188, and 209 to 210 each bind 1-deoxy-D-xylulose 5-phosphate; these read AG and NT.

This sequence belongs to the ThiG family. Homotetramer. Forms heterodimers with either ThiH or ThiS.

The protein resides in the cytoplasm. It carries out the reaction [ThiS sulfur-carrier protein]-C-terminal-Gly-aminoethanethioate + 2-iminoacetate + 1-deoxy-D-xylulose 5-phosphate = [ThiS sulfur-carrier protein]-C-terminal Gly-Gly + 2-[(2R,5Z)-2-carboxy-4-methylthiazol-5(2H)-ylidene]ethyl phosphate + 2 H2O + H(+). Its pathway is cofactor biosynthesis; thiamine diphosphate biosynthesis. Functionally, catalyzes the rearrangement of 1-deoxy-D-xylulose 5-phosphate (DXP) to produce the thiazole phosphate moiety of thiamine. Sulfur is provided by the thiocarboxylate moiety of the carrier protein ThiS. In vitro, sulfur can be provided by H(2)S. The chain is Thiazole synthase from Sulfurimonas denitrificans (strain ATCC 33889 / DSM 1251) (Thiomicrospira denitrificans (strain ATCC 33889 / DSM 1251)).